We begin with the raw amino-acid sequence, 345 residues long: IGF-like family receptor 1 (345 aa).

The first 20 residues, methionine 1–alanine 20, serve as a signal peptide directing secretion. Residues alanine 21–serine 163 lie on the Extracellular side of the membrane. N-linked (GlcNAc...) asparagine glycosylation occurs at asparagine 87. The disordered stretch occupies residues valine 106 to threonine 149. A compositionally biased stretch (basic residues) spans arginine 111–valine 121. Over residues alanine 136 to threonine 149 the composition is skewed to polar residues. A helical transmembrane segment spans residues valine 164 to leucine 184. Topologically, residues leucine 185–glycine 345 are cytoplasmic.

In terms of tissue distribution, ubiquitously expressed with higher expression in lymph node. Highly expressed in T-cells and monocytes.

The protein localises to the cell membrane. Functionally, probable cell membrane receptor for the IGF-like family protein IGFL. This is IGF-like family receptor 1 (Igflr1) from Mus musculus (Mouse).